The chain runs to 99 residues: Aspartyl/glutamyl-tRNA(Asn/Gln) amidotransferase subunit C (99 aa).

This sequence belongs to the GatC family. In terms of assembly, heterotrimer of A, B and C subunits.

The enzyme catalyses L-glutamyl-tRNA(Gln) + L-glutamine + ATP + H2O = L-glutaminyl-tRNA(Gln) + L-glutamate + ADP + phosphate + H(+). It carries out the reaction L-aspartyl-tRNA(Asn) + L-glutamine + ATP + H2O = L-asparaginyl-tRNA(Asn) + L-glutamate + ADP + phosphate + 2 H(+). Its function is as follows. Allows the formation of correctly charged Asn-tRNA(Asn) or Gln-tRNA(Gln) through the transamidation of misacylated Asp-tRNA(Asn) or Glu-tRNA(Gln) in organisms which lack either or both of asparaginyl-tRNA or glutaminyl-tRNA synthetases. The reaction takes place in the presence of glutamine and ATP through an activated phospho-Asp-tRNA(Asn) or phospho-Glu-tRNA(Gln). The polypeptide is Aspartyl/glutamyl-tRNA(Asn/Gln) amidotransferase subunit C (Corynebacterium glutamicum (strain R)).